Consider the following 300-residue polypeptide: Ribosomal protein bS6--L-glutamate ligase (300 aa).

An ATP-grasp domain is found at methionine 104–glutamate 287. Residues lysine 141, glutamate 178 to tyrosine 179, aspartate 187, and arginine 211 to asparagine 213 contribute to the ATP site. Mg(2+)-binding residues include aspartate 248, glutamate 260, and asparagine 262. Mn(2+) is bound by residues aspartate 248, glutamate 260, and asparagine 262.

The protein belongs to the RimK family. Requires Mg(2+) as cofactor. It depends on Mn(2+) as a cofactor.

Its function is as follows. An L-glutamate ligase that catalyzes the ATP-dependent post-translational addition of glutamate residues to the C-terminus of ribosomal protein bS6 (RpsF). Is also able to catalyze the synthesis of poly-alpha-glutamate in vitro, via ATP hydrolysis from unprotected glutamate as substrate. The number of glutamate residues added to either RpsF or to poly-alpha-glutamate changes with pH. This Shigella boydii serotype 4 (strain Sb227) protein is Ribosomal protein bS6--L-glutamate ligase.